The sequence spans 278 residues: Adenosylcobinamide-GDP ribazoletransferase (278 aa).

The next 7 helical transmembrane spans lie at 31–51 (AMAL…SAVF), 66–86 (TLLP…GLHL), 115–135 (TIGA…VGAL), 148–168 (ILVA…GAVP), 187–207 (DAAL…LLDF), 215–237 (ALRA…RYLL), and 247–267 (ILGG…AMTI).

The protein belongs to the CobS family. Mg(2+) serves as cofactor.

It is found in the cell membrane. It catalyses the reaction alpha-ribazole + adenosylcob(III)inamide-GDP = adenosylcob(III)alamin + GMP + H(+). The catalysed reaction is alpha-ribazole 5'-phosphate + adenosylcob(III)inamide-GDP = adenosylcob(III)alamin 5'-phosphate + GMP + H(+). It participates in cofactor biosynthesis; adenosylcobalamin biosynthesis; adenosylcobalamin from cob(II)yrinate a,c-diamide: step 7/7. In terms of biological role, joins adenosylcobinamide-GDP and alpha-ribazole to generate adenosylcobalamin (Ado-cobalamin). Also synthesizes adenosylcobalamin 5'-phosphate from adenosylcobinamide-GDP and alpha-ribazole 5'-phosphate. This Frankia casuarinae (strain DSM 45818 / CECT 9043 / HFP020203 / CcI3) protein is Adenosylcobinamide-GDP ribazoletransferase.